We begin with the raw amino-acid sequence, 505 residues long: Glycerol kinase (505 aa).

Residue Thr-14 coordinates ADP. Residues Thr-14, Thr-15, and Ser-16 each coordinate ATP. Thr-14 serves as a coordination point for sn-glycerol 3-phosphate. ADP is bound at residue Arg-18. Sn-glycerol 3-phosphate contacts are provided by Arg-84, Glu-85, Tyr-136, and Asp-246. Positions 84, 85, 136, 246, and 247 each coordinate glycerol. Residues Thr-268 and Gly-311 each coordinate ADP. ATP is bound by residues Thr-268, Gly-311, Gln-315, and Gly-412. Residues Gly-412 and Asn-416 each contribute to the ADP site.

The protein belongs to the FGGY kinase family.

The catalysed reaction is glycerol + ATP = sn-glycerol 3-phosphate + ADP + H(+). It participates in polyol metabolism; glycerol degradation via glycerol kinase pathway; sn-glycerol 3-phosphate from glycerol: step 1/1. With respect to regulation, inhibited by fructose 1,6-bisphosphate (FBP). Functionally, key enzyme in the regulation of glycerol uptake and metabolism. Catalyzes the phosphorylation of glycerol to yield sn-glycerol 3-phosphate. The polypeptide is Glycerol kinase (Vibrio cholerae serotype O1 (strain M66-2)).